Reading from the N-terminus, the 354-residue chain is Neutral protease 2 homolog MEP3 (354 aa).

The signal sequence occupies residues 1-19 (MHFTSSLLALVALTTQALA). Positions 20 to 179 (FPLNDLPKRD…QSAIPKLEKR (160 aa)) are excised as a propeptide. Disulfide bonds link C186–C256 and C263–C281. H305 is a Zn(2+) binding site. Residue E306 is part of the active site. H309 and D320 together coordinate Zn(2+).

It belongs to the peptidase M35 family. Zn(2+) serves as cofactor.

It is found in the secreted. It carries out the reaction Preferential cleavage of bonds with hydrophobic residues in P1'. Also 3-Asn-|-Gln-4 and 8-Gly-|-Ser-9 bonds in insulin B chain.. Its function is as follows. Secreted metalloproteinase that allows assimilation of proteinaceous substrates. Shows high activities on basic nuclear substrates such as histone and protamine. May be involved in virulence. This Coccidioides posadasii (strain C735) (Valley fever fungus) protein is Neutral protease 2 homolog MEP3 (MEP3).